A 134-amino-acid polypeptide reads, in one-letter code: ATP synthase epsilon chain (134 aa).

This sequence belongs to the ATPase epsilon chain family. F-type ATPases have 2 components, CF(1) - the catalytic core - and CF(0) - the membrane proton channel. CF(1) has five subunits: alpha(3), beta(3), gamma(1), delta(1), epsilon(1). CF(0) has three main subunits: a, b and c.

It is found in the cell membrane. In terms of biological role, produces ATP from ADP in the presence of a proton gradient across the membrane. The sequence is that of ATP synthase epsilon chain from Staphylococcus saprophyticus subsp. saprophyticus (strain ATCC 15305 / DSM 20229 / NCIMB 8711 / NCTC 7292 / S-41).